A 258-amino-acid chain; its full sequence is MPSKKALVRRPSPRLAEGLVTHVEREKVDHGLALEQWDAYVEALGAHGWETLEVDPADDCPDSVFVEDAVVVFRNVALITRPGAESRRAETAGVEEAVARLGCSVNWVWEPGTLDGGDVLKIGDTIYVGRGGRTNAAGVQQLRAAFEPLGARVVAVPVSKVLHLKSAVTALPDGTVIGHIPLTDVPSLFPRFLPVPEESGAHVVLLGGSRLLMAASAPKTAELLADLGHEPVLVDIGEFEKLEGCVTCLSVRLRELYD.

Residues leucine 19, aspartate 62, 67–68 (ED), arginine 87, and arginine 133 contribute to the substrate site. Histidine 163 (proton donor) is an active-site residue. Residue cysteine 248 is the Nucleophile of the active site.

Belongs to the DDAH family.

It catalyses the reaction N(omega),N(omega)-dimethyl-L-arginine + H2O = dimethylamine + L-citrulline. It carries out the reaction N(omega)-methyl-L-arginine + H2O = L-citrulline + methylamine. Hydrolyzes N(G),N(G)-dimethyl-L-arginine (ADMA) and N(G)-monomethyl-L-arginine (MMA). The protein is N(G),N(G)-dimethylarginine dimethylaminohydrolase (ddaH) of Streptomyces coelicolor (strain ATCC BAA-471 / A3(2) / M145).